Here is a 167-residue protein sequence, read N- to C-terminus: Shikimate kinase (167 aa).

Position 12–17 (12–17) interacts with ATP; it reads GSGKTT. Thr16 is a binding site for Mg(2+). Positions 34, 58, and 80 each coordinate substrate. An ATP-binding site is contributed by Arg117. Arg135 is a substrate binding site. ATP is bound at residue Arg152.

This sequence belongs to the shikimate kinase family. Monomer. The cofactor is Mg(2+).

It is found in the cytoplasm. It carries out the reaction shikimate + ATP = 3-phosphoshikimate + ADP + H(+). It functions in the pathway metabolic intermediate biosynthesis; chorismate biosynthesis; chorismate from D-erythrose 4-phosphate and phosphoenolpyruvate: step 5/7. In terms of biological role, catalyzes the specific phosphorylation of the 3-hydroxyl group of shikimic acid using ATP as a cosubstrate. The protein is Shikimate kinase of Salinispora arenicola (strain CNS-205).